The sequence spans 55 residues: Large ribosomal subunit protein bL33 (55 aa).

It belongs to the bacterial ribosomal protein bL33 family.

This chain is Large ribosomal subunit protein bL33, found in Agrobacterium fabrum (strain C58 / ATCC 33970) (Agrobacterium tumefaciens (strain C58)).